An 88-amino-acid polypeptide reads, in one-letter code: Cell division topological specificity factor (88 aa).

This sequence belongs to the MinE family.

Prevents the cell division inhibition by proteins MinC and MinD at internal division sites while permitting inhibition at polar sites. This ensures cell division at the proper site by restricting the formation of a division septum at the midpoint of the long axis of the cell. This chain is Cell division topological specificity factor, found in Acidovorax ebreus (strain TPSY) (Diaphorobacter sp. (strain TPSY)).